The sequence spans 292 residues: Xanthine dehydrogenase FAD-binding subunit (292 aa).

Residues 1–176 enclose the FAD-binding PCMH-type domain; that stretch reads MFDFASYHRA…VAFHFPPQPK (176 aa). FAD-binding positions include 27–34, 109–113, Ile-165, and Phe-184; these read KLLAGGTD and ATYGG.

As to quaternary structure, heterotrimer of XdhA, XdhB and XdhC. Requires FAD as cofactor.

The enzyme catalyses xanthine + NAD(+) + H2O = urate + NADH + H(+). It catalyses the reaction hypoxanthine + NAD(+) + H2O = xanthine + NADH + H(+). It participates in purine metabolism; hypoxanthine degradation; urate from hypoxanthine: step 1/2. It functions in the pathway purine metabolism; hypoxanthine degradation; urate from hypoxanthine: step 2/2. In terms of biological role, presumed to be a dehydrogenase, but possibly an oxidase. Participates in limited purine salvage (requires aspartate) but does not support aerobic growth on purines as the sole carbon source (purine catabolism). This Escherichia coli O157:H7 protein is Xanthine dehydrogenase FAD-binding subunit (xdhB).